The chain runs to 226 residues: MEHRVFTIANFFSSNHDFITGFFVVLTAVLMFLISLGASRKMQMVPMGLQNVYESIISAILSVAKDIIGEELARKYFPLAGTIALYVFFSNMIGIIPGFESPTASWSFTLVLALIVFFYYHFEGIRVQGFFKYFAHFAGPVKWLAPFMFPIEIISHFSRIVSLSFRLFGNIKGDDMFLLIMLLLVPWAVPVAPFMVLFFMGILQAFVFMILTYVYLAGAVLTDEGH.

The next 6 helical transmembrane spans lie at 18–38 (FITG…SLGA), 79–99 (LAGT…IPGF), 105–125 (SWSF…FEGI), 134–154 (FAHF…IEII), 179–199 (LIML…VLFF), and 201–221 (GILQ…GAVL).

The protein belongs to the ATPase A chain family. F-type ATPases have 2 components, CF(1) - the catalytic core - and CF(0) - the membrane proton channel. CF(1) has five subunits: alpha(3), beta(3), gamma(1), delta(1), epsilon(1). CF(0) has three main subunits: a(1), b(2) and c(9-12). The alpha and beta chains form an alternating ring which encloses part of the gamma chain. CF(1) is attached to CF(0) by a central stalk formed by the gamma and epsilon chains, while a peripheral stalk is formed by the delta and b chains.

Its subcellular location is the cell inner membrane. Its function is as follows. Key component of the proton channel; it plays a direct role in the translocation of protons across the membrane. The protein is ATP synthase subunit a of Helicobacter pylori (strain HPAG1).